A 390-amino-acid chain; its full sequence is Precorrin-6Y C(5,15)-methyltransferase [decarboxylating] (390 aa).

Belongs to the precorrin methyltransferase family.

It carries out the reaction precorrin-6B + 2 S-adenosyl-L-methionine = precorrin-8X + 2 S-adenosyl-L-homocysteine + CO2 + 3 H(+). It functions in the pathway cofactor biosynthesis; adenosylcobalamin biosynthesis; cob(II)yrinate a,c-diamide from precorrin-2 (aerobic route): step 7/10. In terms of biological role, catalyzes the methylation of both C-5 and C-15 in precorrin-6Y to form precorrin-8X. This is Precorrin-6Y C(5,15)-methyltransferase [decarboxylating] (cobL) from Mycobacterium tuberculosis (strain ATCC 25618 / H37Rv).